The sequence spans 361 residues: Glycerophosphodiester phosphodiesterase GDPD1, chloroplastic (361 aa).

The N-terminal 53 residues, 1–53 (MSLKAIHVSEVPSLDHFPENPSLICSSRKANNKFVVVGHRGHGMNMSQSPDLR), are a transit peptide targeting the chloroplast. The GP-PDE domain occupies 54-323 (FSALKENSIL…DHVEEITEAV (270 aa)).

Belongs to the glycerophosphoryl diester phosphodiesterase family. The cofactor is Mg(2+). Expressed in roots, shoots, rosette leaves, stems, flowers and siliques.

The protein resides in the plastid. It is found in the chloroplast. It catalyses the reaction a sn-glycero-3-phosphodiester + H2O = an alcohol + sn-glycerol 3-phosphate + H(+). Its function is as follows. Hydrolyzes glycerolphosphoglycerol, glycerophosphocholine and glycerophosphoethanolamine in vitro. May be involved in release of inorganic phosphate (Pi) from phospholipids during Pi starvation. The chain is Glycerophosphodiester phosphodiesterase GDPD1, chloroplastic from Arabidopsis thaliana (Mouse-ear cress).